The sequence spans 308 residues: Zinc finger CCCH domain-containing protein 15 (308 aa).

The disordered stretch occupies residues 1 to 21 (MENKIAPFSYSGSSAGNSSSG). Positions 9–21 (SYSGSSAGNSSSG) are enriched in low complexity. Residues 56-91 (TRLHEASLEAEALRLENTELRSMNLRLKNELNSLIR) adopt a coiled-coil conformation. Residues 110–190 (LSIGGNDADE…GTVTKPGTCG (81 aa)) form a disordered region. Ser-111 carries the phosphoserine modification. Residues 148-164 (RSSLPKSISVRSNGYSK) show a composition bias toward polar residues. 2 C3H1-type zinc fingers span residues 222-250 (MTKTELCNKWQETGTCPYGDHCQFAHGIK) and 260-288 (RYKTEVCRMVLAGDNCPYGHRCHFRHSLS).

In terms of processing, phosphorylated at Ser-111 by ASK7/BIN2 in the cytoplasm in the absence of brassinosteroids (BRs). In terms of tissue distribution, highly expressed in secondary cell wall-forming tissues and the xylem cells of roots. Expressed predominantly in inflorescence stems, flowers and siliques. Highly expressed in the basal portion of stems, where cells are undergoing secondary cell wall thickening. Highly expressed in meiocytes and tapetum from anthers.

The protein resides in the cytoplasm. Its subcellular location is the nucleus. Functionally, functions probably as a transcriptional factor that activates genes involved in secondary cell wall biosynthesis. Functions redudantly with C3H14 to regulate secondary cell wall formation. C3H14 and C3H15 have overlapping roles in the regulation of secondary cell wall formation and anther development. C3H14 may contribute more to secondary cell wall thickening while C3H15 could be more important in anther development. May regulate at both the transcriptional and post-transcriptional levels the expression of many genes involved in various biological processes, particularly those associated with cell wall metabolism and pollen development. Involved in the regulation of callose metabolism in male meiocytes, in integrity of newly formed microspores, and promotes male fertility. May be involved in the regulation of the callose synthesis genes CALS5 and CALS12, the potential degradation of callose walls-related genes A6 and MYB80, as well as other putative beta-1,3-glucanase genes. Negatively regulates cell elongation by inhibiting brassinosteroid (BR) signaling. Functions downstream of the BRI1 receptor as a negative regulator in the BR pathway. The chain is Zinc finger CCCH domain-containing protein 15 from Arabidopsis thaliana (Mouse-ear cress).